We begin with the raw amino-acid sequence, 221 residues long: DNA mismatch repair protein MutH (221 aa).

This sequence belongs to the MutH family.

The protein resides in the cytoplasm. Sequence-specific endonuclease that cleaves unmethylated GATC sequences. It is involved in DNA mismatch repair. The chain is DNA mismatch repair protein MutH from Vibrio cholerae serotype O1 (strain ATCC 39315 / El Tor Inaba N16961).